We begin with the raw amino-acid sequence, 154 residues long: Interleukin-2 (154 aa).

The signal sequence occupies residues 1 to 20 (MYKLQLLSCIALTLALVANS). Threonine 23 is a glycosylation site (O-linked (GalNAc...) threonine). Cysteine 78 and cysteine 126 are joined by a disulfide.

This sequence belongs to the IL-2 family.

The protein localises to the secreted. Cytokine produced by activated CD4-positive helper T-cells and to a lesser extend activated CD8-positive T-cells and natural killer (NK) cells that plays pivotal roles in the immune response and tolerance. Binds to a receptor complex composed of either the high-affinity trimeric IL-2R (IL2RA/CD25, IL2RB/CD122 and IL2RG/CD132) or the low-affinity dimeric IL-2R (IL2RB and IL2RG). Interaction with the receptor leads to oligomerization and conformation changes in the IL-2R subunits resulting in downstream signaling starting with phosphorylation of JAK1 and JAK3. In turn, JAK1 and JAK3 phosphorylate the receptor to form a docking site leading to the phosphorylation of several substrates including STAT5. This process leads to activation of several pathways including STAT, phosphoinositide-3-kinase/PI3K and mitogen-activated protein kinase/MAPK pathways. Functions as a T-cell growth factor and can increase NK-cell cytolytic activity as well. Promotes strong proliferation of activated B-cells and subsequently immunoglobulin production. Plays a pivotal role in regulating the adaptive immune system by controlling the survival and proliferation of regulatory T-cells, which are required for the maintenance of immune tolerance. Moreover, participates in the differentiation and homeostasis of effector T-cell subsets, including Th1, Th2, Th17 as well as memory CD8-positive T-cells. This is Interleukin-2 (IL2) from Lama glama (Llama).